The chain runs to 176 residues: MLDRDGYRPNVGIIICNTRNQVFWGKRVREHSWQFPQGGIKPGESPEAAMYRELMEEVGLSPHHVKIIGRTRDWLRYDVPTHWVRREWRGSYRGQKQIWFLLRLTGRDSDVCLRATHHPEFDGWRWSDYWSPIEHVIDFKRNVYEMALTELSRYLRGLESRQASDAGAVQPDGAPL.

Positions 6–149 constitute a Nudix hydrolase domain; that stretch reads GYRPNVGIII…KRNVYEMALT (144 aa). A Nudix box motif is present at residues 38-59; that stretch reads GGIKPGESPEAAMYRELMEEVG.

Belongs to the Nudix hydrolase family. RppH subfamily. It depends on a divalent metal cation as a cofactor.

Accelerates the degradation of transcripts by removing pyrophosphate from the 5'-end of triphosphorylated RNA, leading to a more labile monophosphorylated state that can stimulate subsequent ribonuclease cleavage. This Laribacter hongkongensis (strain HLHK9) protein is RNA pyrophosphohydrolase.